Consider the following 656-residue polypeptide: 1-deoxy-D-xylulose-5-phosphate synthase 1 (656 aa).

Thiamine diphosphate is bound by residues H73 and 113–115 (SHA). Mg(2+) is bound at residue D144. Thiamine diphosphate contacts are provided by residues 145-146 (GA), N174, Y285, and E367. Residue N174 coordinates Mg(2+). The segment at 625–656 (AGDRAGGPAVEQPGDGRMSGDGRIVMPAQGEN) is disordered.

It belongs to the transketolase family. DXPS subfamily. Homodimer. It depends on Mg(2+) as a cofactor. Thiamine diphosphate is required as a cofactor.

The enzyme catalyses D-glyceraldehyde 3-phosphate + pyruvate + H(+) = 1-deoxy-D-xylulose 5-phosphate + CO2. It functions in the pathway metabolic intermediate biosynthesis; 1-deoxy-D-xylulose 5-phosphate biosynthesis; 1-deoxy-D-xylulose 5-phosphate from D-glyceraldehyde 3-phosphate and pyruvate: step 1/1. Catalyzes the acyloin condensation reaction between C atoms 2 and 3 of pyruvate and glyceraldehyde 3-phosphate to yield 1-deoxy-D-xylulose-5-phosphate (DXP). The polypeptide is 1-deoxy-D-xylulose-5-phosphate synthase 1 (Streptomyces coelicolor (strain ATCC BAA-471 / A3(2) / M145)).